The primary structure comprises 379 residues: L-demethylnoviosyl transferase (379 aa).

It belongs to the glycosyltransferase 28 family.

The catalysed reaction is dTDP-4-O-demethyl-beta-L-noviose + novobiocic acid = desmethyldescarbamoylnovobiocin + dTDP + H(+). It functions in the pathway antibiotic biosynthesis; novobiocin biosynthesis. Its activity is regulated as follows. Inhibited by TDP-L-rhamnose, the sugar donor that most closely structurally resembles the natural substrate dTDP-beta-L-noviose. Functionally, catalyzes the transfer of L-noviose from dTDP-4-O-demethyl-beta-L-noviose to the phenolic oxygen of novobiocic acid, creating the full ABC ring system in the novobiocin biosynthesis pathway. Novobiocin is an aminocoumarin family antibiotic that targets bacterial DNA gyrases. Also shows activity with variant coumarin aglycones, suggesting it may be a promiscuous catalyst for noviosylation of a range of planar scaffolds. Does not show activity with TDP-L-rhamnose. This is L-demethylnoviosyl transferase (novM) from Streptomyces niveus (Streptomyces spheroides).